We begin with the raw amino-acid sequence, 492 residues long: Differentially expressed in FDCP 8 homolog (492 aa).

The segment covering 38–51 has biased composition (gly residues); the sequence is GLGGSGSTGSGSEA. A disordered region spans residues 38–62; that stretch reads GLGGSGSTGSGSEAGGSEESGPQGA. Phorbol-ester/DAG-type zinc fingers lie at residues 161–214 and 400–453; these read PHHG…KRVC and DHIR…NMIC. The interval 468-492 is disordered; the sequence is RMKSTEDDDDDDDGVATDDDVTAAE. The span at 473–492 shows a compositional bias: acidic residues; sequence EDDDDDDDGVATDDDVTAAE.

This sequence belongs to the DEF8 family.

In Drosophila melanogaster (Fruit fly), this protein is Differentially expressed in FDCP 8 homolog.